The chain runs to 231 residues: Putative carboxymethylenebutenolidase (231 aa).

Residues cysteine 118, aspartate 167, and histidine 199 contribute to the active site.

The protein belongs to the dienelactone hydrolase family.

The enzyme catalyses 2-(5-oxo-2,5-dihydrofuran-2-ylidene)acetate + H2O = 4-oxohex-2-enedioate + H(+). The chain is Putative carboxymethylenebutenolidase from Aquifex aeolicus (strain VF5).